The following is a 510-amino-acid chain: Ribonuclease Y (510 aa).

A helical membrane pass occupies residues 4–24; it reads LLWAVVALLAGLAGGAGIGVY. A KH domain is found at 200–260; the sequence is TVSTVNLPSE…VRREVARVAL (61 aa). The region spanning 326–419 is the HD domain; that stretch reads VLQHSLECAL…VIAADAISGA (94 aa).

The protein belongs to the RNase Y family.

Its subcellular location is the cell membrane. Its function is as follows. Endoribonuclease that initiates mRNA decay. The protein is Ribonuclease Y of Chloroflexus aurantiacus (strain ATCC 29366 / DSM 635 / J-10-fl).